The sequence spans 205 residues: Transcriptional regulatory protein PdtaR (205 aa).

Residues 15-129 enclose the Response regulatory domain; the sequence is RVLIAEDEAL…DLIPAIELAV (115 aa). Position 65 is a 4-aspartylphosphate (D65). In terms of domain architecture, ANTAR spans 135-196; it reads ITALEGEVAT…TMKRVAEVVL (62 aa).

Post-translationally, phosphorylated and activated by PdtaS.

The protein resides in the cytoplasm. In terms of biological role, member of the two-component regulatory system PdtaR/PdtaS. This two-component system plays an essential role in mycobacterial adaptation to poor nutrient conditions. PdtaR probably acts at the level of transcriptional antitermination rather than transcriptional initiation. Its function is as follows. In addition, the PdtaR/PdtaS two-component system controls copper and nitric oxide (NO) resistance downstream of the intramembrane protease Rip1. This coupled Rip1/PdtaS/PdtaR circuit controls NO resistance and acute lung infection in mice by relieving PdtaR/PdtaS-mediated repression of isonitrile chalkophore biosynthesis. Two signals are required to fully inactivate the PdtaR/PdtaS system and mediate NO resistance: a cytoplasmic inhibitory signal through the PdtaS kinase mediated by direct sensing of NO and the production of PPE1-5', an NO-induced small RNA, to sequester PdtaR. In Mycobacterium tuberculosis (strain CDC 1551 / Oshkosh), this protein is Transcriptional regulatory protein PdtaR (pdtaR).